Here is an 854-residue protein sequence, read N- to C-terminus: Alkaline phosphatase-like protein PglZ (854 aa).

Belongs to the alkaline phosphatase superfamily.

In terms of biological role, BREX systems (bacteriophage exclusion) provide immunity against bacteriophage. A core protein of a type 1 BREX system. This system allows phage adsorption but prevents phage DNA replication, without degradation of the phage DNA. Methylation of bacterial DNA by PglX probably guides self/non-self discrimination. When the brxA-brxB-brxC-pglX and pglZ-brxL operons are transformed into a susceptible B.subtilis strain (BEST7003) they confer resistance to bacteriophages SPbeta, SP16, Zeta, phi3T and SP02 and partial protection to phages SP01 and SP82G (these include lytic and temperate phage). They do not protect against phages phi105, rho10 or rho14. Additionally confers a very slight reduction in efficiency of plasmid transformation. This chain is Alkaline phosphatase-like protein PglZ, found in Bacillus cereus (strain H3081.97).